The primary structure comprises 833 residues: Patatin-like phospholipase domain-containing protein SNOG_00918 (833 aa).

2 disordered regions span residues 1–20 (MTDV…SAFD) and 49–71 (HLSP…SANN). Residues 108–128 (WPLLVVVLGWLLFLSIAYVFT) form a helical membrane-spanning segment. The 157-residue stretch at 301 to 457 (LCLSGGATFA…RTDIPLKALN (157 aa)) folds into the PNPLA domain. Residues 332-336 (GTSGG) carry the GXSXG motif. The active-site Nucleophile is Ser-334. Residue Asp-444 is the Proton acceptor of the active site. 2 disordered regions span residues 630-657 (TKSK…FSRP) and 680-833 (LRTD…GKGL). Residues 644–655 (SGSESSSSADFS) show a composition bias toward low complexity. Polar residues predominate over residues 689–707 (DTPNSPSLSARLTGWWNTK). Basic and acidic residues-rich tracts occupy residues 740–750 (RPPKEVRDLQA), 759–769 (RNSDFLEEIRR), and 782–794 (DEGR…RGDV). Residues 809-819 (EFGDNEGDGEE) are compositionally biased toward acidic residues.

It belongs to the PLPL family.

The protein localises to the membrane. Probable lipid hydrolase. In Phaeosphaeria nodorum (strain SN15 / ATCC MYA-4574 / FGSC 10173) (Glume blotch fungus), this protein is Patatin-like phospholipase domain-containing protein SNOG_00918.